The sequence spans 410 residues: Peptidase T (410 aa).

H79 is a binding site for Zn(2+). The active site involves D81. Residue D142 participates in Zn(2+) binding. The active-site Proton acceptor is the E176. Residues E177, D199, and H381 each contribute to the Zn(2+) site.

The protein belongs to the peptidase M20B family. Zn(2+) is required as a cofactor.

Its subcellular location is the cytoplasm. It catalyses the reaction Release of the N-terminal residue from a tripeptide.. Cleaves the N-terminal amino acid of tripeptides. The sequence is that of Peptidase T from Bacillus anthracis (strain A0248).